The chain runs to 174 residues: Extracellular cysteine protease (174 aa).

Catalysis depends on residues Cys24, His120, and Asn141.

Belongs to the peptidase C47 family. Post-translationally, proteolytically cleaved.

Its subcellular location is the secreted. It is found in the cell wall. Its activity is regulated as follows. Inhibited by heavy metal ions such as Zn(2+) or Ni(2+), iodoacetamide, N-ethylmaleimide, leupeptin, SDS and E-64. Also inhibited by chloromethylketones TPCK and TLCK and by human plasma inhibitor alpha-2-macroglobulin. Stimulated by L-cysteine. Its function is as follows. Cysteine protease able to cleave elastin, insulin, myoglobin, fibronectin, fibrinogen, HMW-kininogen, alpha-1-protease inhibitor and alpha-1-antitrypsin. Along with other extracellular proteases may contribute to the colonization and infection of human tissues. The sequence is that of Extracellular cysteine protease (ecpA) from Staphylococcus epidermidis.